The following is a 413-amino-acid chain: PCI domain-containing protein 2 homolog (413 aa).

Residues 222–403 (VAYNYFLGRK…QKLVISKTNA (182 aa)) enclose the PCI domain.

The protein belongs to the CSN12 family.

In Caenorhabditis briggsae, this protein is PCI domain-containing protein 2 homolog.